Consider the following 107-residue polypeptide: Putative double-stranded DNA mimic protein NTHI1680 (107 aa).

Belongs to the putative dsDNA mimic protein family.

May act as a double-stranded DNA (dsDNA) mimic. Probably regulates the activity of a dsDNA-binding protein. This is Putative double-stranded DNA mimic protein NTHI1680 from Haemophilus influenzae (strain 86-028NP).